Here is a 544-residue protein sequence, read N- to C-terminus: Chaperonin GroEL 4 (544 aa).

ATP-binding positions include 30 to 33 (TLGP), Lys-51, 87 to 91 (DGTTT), Gly-415, and Asp-496.

It belongs to the chaperonin (HSP60) family. As to quaternary structure, forms a cylinder of 14 subunits composed of two heptameric rings stacked back-to-back. Interacts with the co-chaperonin GroES.

The protein localises to the cytoplasm. The catalysed reaction is ATP + H2O + a folded polypeptide = ADP + phosphate + an unfolded polypeptide.. In terms of biological role, together with its co-chaperonin GroES, plays an essential role in assisting protein folding. The GroEL-GroES system forms a nano-cage that allows encapsulation of the non-native substrate proteins and provides a physical environment optimized to promote and accelerate protein folding. This chain is Chaperonin GroEL 4, found in Sinorhizobium medicae (strain WSM419) (Ensifer medicae).